Here is a 352-residue protein sequence, read N- to C-terminus: N-acetyl-gamma-glutamyl-phosphate reductase (352 aa).

C155 is an active-site residue.

Belongs to the NAGSA dehydrogenase family. Type 1 subfamily.

It localises to the cytoplasm. It catalyses the reaction N-acetyl-L-glutamate 5-semialdehyde + phosphate + NADP(+) = N-acetyl-L-glutamyl 5-phosphate + NADPH + H(+). It participates in amino-acid biosynthesis; L-arginine biosynthesis; N(2)-acetyl-L-ornithine from L-glutamate: step 3/4. In terms of biological role, catalyzes the NADPH-dependent reduction of N-acetyl-5-glutamyl phosphate to yield N-acetyl-L-glutamate 5-semialdehyde. In Crocosphaera subtropica (strain ATCC 51142 / BH68) (Cyanothece sp. (strain ATCC 51142)), this protein is N-acetyl-gamma-glutamyl-phosphate reductase.